The primary structure comprises 94 residues: MTINYQFGDVDAHGAMIRAQAGLLEAEHQAIVRDVLAAGDFWGGAGSVACQEFITQLGRNFQVIYEQANAHGQKVQAAGNNMAQTDSAVGSSWA.

This sequence belongs to the WXG100 family. ESAT-6 subfamily. Forms a complex with EsxP.

The protein localises to the secreted. The chain is ESAT-6-like protein EsxO from Mycobacterium tuberculosis (strain CDC 1551 / Oshkosh).